The following is a 212-amino-acid chain: Mediator of RNA polymerase II transcription subunit 20 (212 aa).

The protein belongs to the Mediator complex subunit 20 family. Component of the Mediator complex, which is composed of MED1, MED4, MED6, MED7, MED8, MED9, MED10, MED11, MED12, MED13, MED13L, MED14, MED15, MED16, MED17, MED18, MED19, MED20, MED21, MED22, MED23, MED24, MED25, MED26, MED27, MED29, MED30, MED31, CCNC, CDK8 and CDC2L6/CDK11. The MED12, MED13, CCNC and CDK8 subunits form a distinct module termed the CDK8 module. Mediator containing the CDK8 module is less active than Mediator lacking this module in supporting transcriptional activation. Individual preparations of the Mediator complex lacking one or more distinct subunits have been variously termed ARC, CRSP, DRIP, PC2, SMCC and TRAP. Interacts with PPARG.

It localises to the nucleus. Its function is as follows. Component of the Mediator complex, a coactivator involved in the regulated transcription of nearly all RNA polymerase II-dependent genes. Mediator functions as a bridge to convey information from gene-specific regulatory proteins to the basal RNA polymerase II transcription machinery. Mediator is recruited to promoters by direct interactions with regulatory proteins and serves as a scaffold for the assembly of a functional preinitiation complex with RNA polymerase II and the general transcription factors. The protein is Mediator of RNA polymerase II transcription subunit 20 (Med20) of Rattus norvegicus (Rat).